The chain runs to 349 residues: Ribosomal RNA small subunit methyltransferase H 1 (349 aa).

S-adenosyl-L-methionine-binding positions include Gly79–His81, Asp99, Phe129, Asp148, and Gln155.

This sequence belongs to the methyltransferase superfamily. RsmH family.

The protein localises to the cytoplasm. The catalysed reaction is cytidine(1402) in 16S rRNA + S-adenosyl-L-methionine = N(4)-methylcytidine(1402) in 16S rRNA + S-adenosyl-L-homocysteine + H(+). Functionally, specifically methylates the N4 position of cytidine in position 1402 (C1402) of 16S rRNA. The sequence is that of Ribosomal RNA small subunit methyltransferase H 1 from Agathobacter rectalis (strain ATCC 33656 / DSM 3377 / JCM 17463 / KCTC 5835 / VPI 0990) (Eubacterium rectale).